The primary structure comprises 225 residues: PKHD-type hydroxylase Smlt1146 (225 aa).

The Fe2OG dioxygenase domain maps to 78–177 (KYLPPRFNRY…RVASFFWVQS (100 aa)). The Fe cation site is built by histidine 96, aspartate 98, and histidine 158. Arginine 168 is a binding site for 2-oxoglutarate.

Requires Fe(2+) as cofactor. It depends on L-ascorbate as a cofactor.

The sequence is that of PKHD-type hydroxylase Smlt1146 from Stenotrophomonas maltophilia (strain K279a).